A 322-amino-acid polypeptide reads, in one-letter code: Acetyl-coenzyme A carboxylase carboxyl transferase subunit alpha (322 aa).

The CoA carboxyltransferase C-terminal domain maps to 30–293 (ALDISAEITR…RQALQESLRK (264 aa)).

The protein belongs to the AccA family. As to quaternary structure, acetyl-CoA carboxylase is a heterohexamer composed of biotin carboxyl carrier protein (AccB), biotin carboxylase (AccC) and two subunits each of ACCase subunit alpha (AccA) and ACCase subunit beta (AccD).

The protein localises to the cytoplasm. The enzyme catalyses N(6)-carboxybiotinyl-L-lysyl-[protein] + acetyl-CoA = N(6)-biotinyl-L-lysyl-[protein] + malonyl-CoA. The protein operates within lipid metabolism; malonyl-CoA biosynthesis; malonyl-CoA from acetyl-CoA: step 1/1. Component of the acetyl coenzyme A carboxylase (ACC) complex. First, biotin carboxylase catalyzes the carboxylation of biotin on its carrier protein (BCCP) and then the CO(2) group is transferred by the carboxyltransferase to acetyl-CoA to form malonyl-CoA. The polypeptide is Acetyl-coenzyme A carboxylase carboxyl transferase subunit alpha (Nitrosomonas eutropha (strain DSM 101675 / C91 / Nm57)).